Here is a 95-residue protein sequence, read N- to C-terminus: UPF0512 protein H (95 aa).

The protein belongs to the UPF0512 family.

This is UPF0512 protein H from Dictyostelium discoideum (Social amoeba).